The primary structure comprises 415 residues: Arrestin domain-containing protein 4 (415 aa).

Short sequence motifs (PPxY motif) lie at residues 347 to 350 (PPNY) and 392 to 395 (PPLY).

This sequence belongs to the arrestin family. As to quaternary structure, interacts with ADRB2. Interacts (via PPxY motifs) with ITCH, NEDD4L and WWP2. Interacts with AVPR2. Identified in a complex containing at least ARRDC4, AVPR2 and HGS. Interacts with SLC11A2; controls the incorporation of SLC11A2 into extracellular vesicles through an ubiquitination-dependent mechanism. Interacts with TRIM65.

Its subcellular location is the early endosome. The protein localises to the cell membrane. It is found in the cytoplasmic vesicle. Its function is as follows. Functions as an adapter recruiting ubiquitin-protein ligases to their specific substrates. Plays a role in endocytosis of activated G protein-coupled receptors (GPCRs). Through an ubiquitination-dependent mechanism also plays a role in the incorporation of SLC11A2 into extracellular vesicles. May play a role in glucose uptake. Participates in innate immune response by promoting IFIH1/MDA5 activation through interaction with TRIM65. This Mus musculus (Mouse) protein is Arrestin domain-containing protein 4.